Here is a 414-residue protein sequence, read N- to C-terminus: Gamma-glutamyl phosphate reductase (414 aa).

The protein belongs to the gamma-glutamyl phosphate reductase family.

It is found in the cytoplasm. The enzyme catalyses L-glutamate 5-semialdehyde + phosphate + NADP(+) = L-glutamyl 5-phosphate + NADPH + H(+). The protein operates within amino-acid biosynthesis; L-proline biosynthesis; L-glutamate 5-semialdehyde from L-glutamate: step 2/2. In terms of biological role, catalyzes the NADPH-dependent reduction of L-glutamate 5-phosphate into L-glutamate 5-semialdehyde and phosphate. The product spontaneously undergoes cyclization to form 1-pyrroline-5-carboxylate. The protein is Gamma-glutamyl phosphate reductase of Xanthomonas campestris pv. campestris (strain ATCC 33913 / DSM 3586 / NCPPB 528 / LMG 568 / P 25).